The sequence spans 81 residues: Large ribosomal subunit protein bL31B (81 aa).

Belongs to the bacterial ribosomal protein bL31 family. Type B subfamily. In terms of assembly, part of the 50S ribosomal subunit.

The polypeptide is Large ribosomal subunit protein bL31B (Bacillus cereus (strain ATCC 10987 / NRS 248)).